The sequence spans 141 residues: Large-conductance mechanosensitive channel (141 aa).

The next 3 membrane-spanning stretches (helical) occupy residues 16–36 (VIDL…VDSV), 40–60 (LIMP…MFIV), and 86–106 (GNFL…FLMV).

Belongs to the MscL family. Homopentamer.

It is found in the cell inner membrane. Its function is as follows. Channel that opens in response to stretch forces in the membrane lipid bilayer. May participate in the regulation of osmotic pressure changes within the cell. The protein is Large-conductance mechanosensitive channel of Cupriavidus necator (strain ATCC 17699 / DSM 428 / KCTC 22496 / NCIMB 10442 / H16 / Stanier 337) (Ralstonia eutropha).